A 617-amino-acid polypeptide reads, in one-letter code: MKQSKMPIPTLREMPSDAQVISHALMLRAGYVRQVSAGVYSYLPLANRVIEKAKNIMRQEFEKIGAVEMLAPTLLSAELWRESGRYETYGEDLYKLKNREKSDFILGPTHEETFTAIVRDSVKSYKQLPLNLYQIQPKYRDEKRPRNGLLRTREFIMKDAYSFHANYDSLDSVYDEYKAAYERIFTRSGLDFKAIIGDGGAMGGKDSQEFMAITSARTDLDRWVVLDKSVASFDEIPAEVQEEIKAELLKWIVSGEDTIAYSSESSYAANLEMATNEYKPSNRVVAEEEVTRVATPDVKSIDEVAAFLNVPEEQTIKTLFYIADGELVAALLVGNDQLNEVKLKNHLGADFFDVASEEEVANVVQAGFGSLGPVGLPENIKIIADRKVQDVRNAVVGANEDGYHLTGVNPGRDFTAEYVDIREVREGEISPDGQGVLNFARGIEIGHIFKLGTRYSASMGADVLDENGRAVPIIMGCYGIGVSRLLSAVMEQHARLFVNKTPKGEYRYAWGINFPKELAPFDVHLITVNVKDEEAQALTEKLEASLMGAGYEVLTDDRNERVGVKFSDSDLIGLPIRITVGKKAADGIVEVKIKATGDTIEVHADNVLETLEILSKK.

This sequence belongs to the class-II aminoacyl-tRNA synthetase family. ProS type 1 subfamily. In terms of assembly, homodimer.

The protein localises to the cytoplasm. It catalyses the reaction tRNA(Pro) + L-proline + ATP = L-prolyl-tRNA(Pro) + AMP + diphosphate. Functionally, catalyzes the attachment of proline to tRNA(Pro) in a two-step reaction: proline is first activated by ATP to form Pro-AMP and then transferred to the acceptor end of tRNA(Pro). As ProRS can inadvertently accommodate and process non-cognate amino acids such as alanine and cysteine, to avoid such errors it has two additional distinct editing activities against alanine. One activity is designated as 'pretransfer' editing and involves the tRNA(Pro)-independent hydrolysis of activated Ala-AMP. The other activity is designated 'posttransfer' editing and involves deacylation of mischarged Ala-tRNA(Pro). The misacylated Cys-tRNA(Pro) is not edited by ProRS. This is Proline--tRNA ligase from Streptococcus pneumoniae (strain ATCC 700669 / Spain 23F-1).